Consider the following 142-residue polypeptide: Hemoglobin subunit alpha (142 aa).

A Globin domain is found at 2–142 (VLSDANKQEI…LVHQLSSKYR (141 aa)). Residue H60 coordinates O2. H89 provides a ligand contact to heme b.

It belongs to the globin family. Heterotetramer of two alpha chains and two beta chains. As to expression, red blood cells.

Involved in oxygen transport from gills to the various peripheral tissues. The polypeptide is Hemoglobin subunit alpha (HBA) (Bathyraja eatonii (Eaton's skate)).